Here is a 1284-residue protein sequence, read N- to C-terminus: Collagen alpha-1(XX) chain (1284 aa).

The signal sequence occupies residues 1–22; the sequence is MSSGDPAHLGLCLWLWLGATLG. The region spanning 28–119 is the Fibronectin type-III 1 domain; that stretch reads ASGLLRLAVL…EFVIEDLKSS (92 aa). Residues 122–171 are disordered; that stretch reads DRSSQRPLGSGAPEPTPSHTGSPDPEQASEPQVAFTPSQDPRTPAGPQFR. In terms of domain architecture, VWFA spans 179–354; that stretch reads DMVFLVDGSW…GALAGLLSRL (176 aa). Fibronectin type-III domains follow at residues 379–468, 469–559, 560–647, 649–738, and 743–833; these read APTS…APLP, PPRA…TLAP, PRHL…TKKA, SPSQ…TPST, and PPSN…ACPA. An N-linked (GlcNAc...) asparagine glycan is attached at Asn-607. The 196-residue stretch at 842 to 1037 folds into the Laminin G-like domain; it reads GFDLMVAFSL…LQMLQIVCSD (196 aa). Disordered regions lie at residues 1065–1190 and 1212–1284; these read SCSS…EKGE and SFHE…GLWE. A compositionally biased stretch (pro residues) spans 1071 to 1082; that stretch reads PGPPGPQGPPGL. 2 consecutive Collagen-like domains span residues 1071-1127 and 1133-1190; these read PGPP…IPGR and PKGM…EKGE. Low complexity-rich tracts occupy residues 1112-1125 and 1166-1181; these read LPGLQGHPGHQGIP and ERGPPGTVGPTGLPGP. A compositionally biased stretch (polar residues) spans 1271-1284; that stretch reads SPGQQGASTQGLWE.

High expression in heart, lung, liver, skeletal muscle, kidney, pancreas, spleen, testis, ovary, subthalamic nucleus and fetal liver. Weak expression in other tissues tested.

Its subcellular location is the secreted. It localises to the extracellular space. Probable collagen protein. In Homo sapiens (Human), this protein is Collagen alpha-1(XX) chain (COL20A1).